A 450-amino-acid chain; its full sequence is 23S rRNA (uracil(1939)-C(5))-methyltransferase RlmD (450 aa).

A disordered region spans residues 1–22; that stretch reads MAKHDRGLRFQPAGGSRAPQIP. Positions 20-78 constitute a TRAM domain; it reads QIPVGKKQRLTIQRLANDGRGIAFVEGRTWFVSGALAGEEVEARVLGSHGKVVEARAER. Residues Cys-91, Cys-97, Cys-100, and Cys-179 each contribute to the [4Fe-4S] cluster site. 6 residues coordinate S-adenosyl-L-methionine: Gln-283, Phe-312, Asn-317, Glu-333, Asp-360, and Asp-381. The active-site Nucleophile is the Cys-407.

The protein belongs to the class I-like SAM-binding methyltransferase superfamily. RNA M5U methyltransferase family. RlmD subfamily.

The enzyme catalyses uridine(1939) in 23S rRNA + S-adenosyl-L-methionine = 5-methyluridine(1939) in 23S rRNA + S-adenosyl-L-homocysteine + H(+). Catalyzes the formation of 5-methyl-uridine at position 1939 (m5U1939) in 23S rRNA. In Pseudomonas fluorescens (strain ATCC BAA-477 / NRRL B-23932 / Pf-5), this protein is 23S rRNA (uracil(1939)-C(5))-methyltransferase RlmD.